Consider the following 519-residue polypeptide: GMP synthase [glutamine-hydrolyzing] (519 aa).

Residues 4–201 (AILILDFGSQ…VHDICDAGYD (198 aa)) enclose the Glutamine amidotransferase type-1 domain. The active-site Nucleophile is the Cys-81. Catalysis depends on residues His-175 and Glu-177. Residues 202–394 (WNMPDYVEEA…LGLPRDLVFR (193 aa)) form the GMPS ATP-PPase domain. 229-235 (SGGVDSS) serves as a coordination point for ATP.

In terms of assembly, homodimer.

It carries out the reaction XMP + L-glutamine + ATP + H2O = GMP + L-glutamate + AMP + diphosphate + 2 H(+). It functions in the pathway purine metabolism; GMP biosynthesis; GMP from XMP (L-Gln route): step 1/1. Its function is as follows. Catalyzes the synthesis of GMP from XMP. The chain is GMP synthase [glutamine-hydrolyzing] from Nitrosomonas eutropha (strain DSM 101675 / C91 / Nm57).